Reading from the N-terminus, the 685-residue chain is A-type ATP synthase subunit I (685 aa).

The next 7 helical transmembrane spans lie at 172–192 (VGGL…VAVP), 348–368 (EIVP…LMFP), 394–414 (VIAV…EVFG), 464–484 (LFMG…NGVI), 538–558 (LVLA…PIIY), 604–624 (MFVI…ADVV), and 626–646 (ALLY…LAFA).

The protein belongs to the V-ATPase 116 kDa subunit family. As to quaternary structure, has multiple subunits with at least A(3), B(3), C, D, E, F, H, I and proteolipid K(x).

It localises to the cell membrane. In terms of biological role, component of the A-type ATP synthase that produces ATP from ADP in the presence of a proton gradient across the membrane. The sequence is that of A-type ATP synthase subunit I from Aeropyrum pernix (strain ATCC 700893 / DSM 11879 / JCM 9820 / NBRC 100138 / K1).